The sequence spans 435 residues: Adenylosuccinate lyase (435 aa).

Residues 4 to 5 (RY), 73 to 75 (RHD), and 99 to 100 (TS) each bind N(6)-(1,2-dicarboxyethyl)-AMP. The active-site Proton donor/acceptor is the His147. A N(6)-(1,2-dicarboxyethyl)-AMP-binding site is contributed by Gln218. The active-site Proton donor/acceptor is Ser268. Residues Ser269, 274-276 (KKN), Asn282, and 313-317 (SAERV) each bind N(6)-(1,2-dicarboxyethyl)-AMP.

The protein belongs to the lyase 1 family. Adenylosuccinate lyase subfamily. Homotetramer. Residues from neighboring subunits contribute catalytic and substrate-binding residues to each active site.

The catalysed reaction is N(6)-(1,2-dicarboxyethyl)-AMP = fumarate + AMP. The enzyme catalyses (2S)-2-[5-amino-1-(5-phospho-beta-D-ribosyl)imidazole-4-carboxamido]succinate = 5-amino-1-(5-phospho-beta-D-ribosyl)imidazole-4-carboxamide + fumarate. The protein operates within purine metabolism; AMP biosynthesis via de novo pathway; AMP from IMP: step 2/2. Its pathway is purine metabolism; IMP biosynthesis via de novo pathway; 5-amino-1-(5-phospho-D-ribosyl)imidazole-4-carboxamide from 5-amino-1-(5-phospho-D-ribosyl)imidazole-4-carboxylate: step 2/2. Its function is as follows. Catalyzes two reactions in de novo purine nucleotide biosynthesis. Catalyzes the breakdown of 5-aminoimidazole- (N-succinylocarboxamide) ribotide (SAICAR or 2-[5-amino-1-(5-phospho-beta-D-ribosyl)imidazole-4-carboxamido]succinate) to 5-aminoimidazole-4-carboxamide ribotide (AICAR or 5-amino-1-(5-phospho-beta-D-ribosyl)imidazole-4-carboxamide) and fumarate, and of adenylosuccinate (ADS or N(6)-(1,2-dicarboxyethyl)-AMP) to adenosine monophosphate (AMP) and fumarate. The sequence is that of Adenylosuccinate lyase (purB) from Deinococcus radiodurans (strain ATCC 13939 / DSM 20539 / JCM 16871 / CCUG 27074 / LMG 4051 / NBRC 15346 / NCIMB 9279 / VKM B-1422 / R1).